A 148-amino-acid polypeptide reads, in one-letter code: Large ribosomal subunit protein bL9 (148 aa).

Belongs to the bacterial ribosomal protein bL9 family.

Binds to the 23S rRNA. The sequence is that of Large ribosomal subunit protein bL9 from Caldicellulosiruptor saccharolyticus (strain ATCC 43494 / DSM 8903 / Tp8T 6331).